The primary structure comprises 50 residues: Ampulexin 2 (50 aa).

Positions methionine 1 to proline 26 are cleaved as a signal peptide.

As to quaternary structure, dimer; disulfide-linked. As to expression, expressed in venom sac and, to a lesser extent, in venom gland. Not expressed in brain.

Its subcellular location is the secreted. Its function is as follows. Amphipathic peptide which probably adopts an alpha-helical structure. Has no antimicrobial activity against E.coli DH5alpha or B.thuringiensis. Is not cytotoxic in vitro. This chain is Ampulexin 2, found in Ampulex compressa (Emerald cockroach wasp).